Consider the following 171-residue polypeptide: UPF0312 protein SAR2769 (171 aa).

The protein belongs to the UPF0312 family.

This Staphylococcus aureus (strain MRSA252) protein is UPF0312 protein SAR2769.